A 509-amino-acid chain; its full sequence is 2,3-bisphosphoglycerate-independent phosphoglycerate mutase (509 aa).

Mn(2+) is bound by residues Asp-12 and Ser-62. Ser-62 (phosphoserine intermediate) is an active-site residue. Residues His-123, 153–154, Arg-185, Arg-191, 260–263, and Lys-333 each bind substrate; these read RD and RPDR. Positions 400, 404, 441, 442, and 460 each coordinate Mn(2+).

It belongs to the BPG-independent phosphoglycerate mutase family. In terms of assembly, monomer. Mn(2+) serves as cofactor.

It carries out the reaction (2R)-2-phosphoglycerate = (2R)-3-phosphoglycerate. The protein operates within carbohydrate degradation; glycolysis; pyruvate from D-glyceraldehyde 3-phosphate: step 3/5. Functionally, catalyzes the interconversion of 2-phosphoglycerate and 3-phosphoglycerate. This chain is 2,3-bisphosphoglycerate-independent phosphoglycerate mutase, found in Clostridium botulinum (strain Langeland / NCTC 10281 / Type F).